Reading from the N-terminus, the 540-residue chain is Probable feruloyl esterase B-1 (540 aa).

A signal peptide spans 1–18; sequence MLVMQLLLPFLASTAAAA. Asparagine 28, asparagine 49, asparagine 66, asparagine 95, asparagine 113, and asparagine 195 each carry an N-linked (GlcNAc...) asparagine glycan. 2 disulfides stabilise this stretch: cysteine 41–cysteine 90 and cysteine 76–cysteine 129. Cystine bridges form between cysteine 202-cysteine 458, cysteine 271-cysteine 288, and cysteine 297-cysteine 308. The active-site Acyl-ester intermediate is the serine 203. Residue asparagine 234 is glycosylated (N-linked (GlcNAc...) asparagine). Aspartate 272, aspartate 275, alanine 277, aspartate 279, and isoleucine 281 together coordinate Ca(2+). Asparagine 298, asparagine 328, and asparagine 367 each carry an N-linked (GlcNAc...) asparagine glycan. Residues aspartate 417 and histidine 457 each act as charge relay system in the active site. N-linked (GlcNAc...) asparagine glycosylation occurs at asparagine 506. Cysteine 517 and cysteine 539 form a disulfide bridge.

It belongs to the tannase family. Homodimer.

It localises to the secreted. The enzyme catalyses feruloyl-polysaccharide + H2O = ferulate + polysaccharide.. Its function is as follows. Involved in degradation of plant cell walls. Hydrolyzes the feruloyl-arabinose ester bond in arabinoxylans as well as the feruloyl-galactose and feruloyl-arabinose ester bonds in pectin. This chain is Probable feruloyl esterase B-1 (faeB-1), found in Aspergillus oryzae (strain ATCC 42149 / RIB 40) (Yellow koji mold).